Consider the following 90-residue polypeptide: MTRRIICQKLGKEADALNYSPYPGELGERIYNHISEQAWQAWLSHQTMLINEYRLSLIDPKARQFLEQEMINFLFGTGSEKPAGYTSEKE.

It belongs to the Fe(2+)-trafficking protein family.

Could be a mediator in iron transactions between iron acquisition and iron-requiring processes, such as synthesis and/or repair of Fe-S clusters in biosynthetic enzymes. The chain is Probable Fe(2+)-trafficking protein from Coxiella burnetii (strain CbuK_Q154) (Coxiella burnetii (strain Q154)).